The primary structure comprises 136 residues: General odorant-binding protein 57d (136 aa).

Residues 1 to 29 (MPEKMSLRLVPHLACIIFILEIQFRIADS) form the signal peptide. Cystine bridges form between C33–C70, C66–C118, and C107–C127.

It belongs to the PBP/GOBP family.

In terms of biological role, present in the aqueous fluid surrounding olfactory sensory dendrites and are thought to aid in the capture and transport of hydrophobic odorants into and through this fluid. This Drosophila melanogaster (Fruit fly) protein is General odorant-binding protein 57d.